Reading from the N-terminus, the 525-residue chain is Neuropilin and tolloid-like protein 2 (525 aa).

A signal peptide spans Met1–Gly22. Over Ile23–His347 the chain is Extracellular. Disulfide bonds link Cys45-Cys72, Cys100-Cys122, Cys177-Cys207, Cys234-Cys256, Cys297-Cys309, Cys304-Cys322, and Cys316-Cys331. 2 CUB domains span residues Cys45 to Ile159 and Cys177 to Phe292. The LDL-receptor class A domain maps to Pro296 to Lys332. Asn311 carries N-linked (GlcNAc...) asparagine glycosylation. The helical transmembrane segment at Gly348–Val368 threads the bilayer. The Cytoplasmic portion of the chain corresponds to Gln369–Phe525. Position 409 is a phosphoserine (Ser409).

In terms of assembly, interacts with GRIK2 and GRIK3, but neither with AMPA-nor with NMDA-sensitive glutamate receptors. N-glycosylated. As to expression, expressed in brain tissues, including cerebellar granule cells (at protein level).

Its subcellular location is the cell membrane. Accessory subunit of neuronal kainate-sensitive glutamate receptors, GRIK2 and GRIK3. Increases kainate-receptor channel activity, slowing the decay kinetics of the receptors, without affecting their expression at the cell surface, and increasing the open probability of the receptor channels. Modulates the agonist sensitivity of kainate receptors. Slows the decay of kainate receptor-mediated excitatory postsynaptic currents (EPSCs), thus directly influencing synaptic transmission. The protein is Neuropilin and tolloid-like protein 2 (Neto2) of Mus musculus (Mouse).